The chain runs to 359 residues: Peptide chain release factor 1 (359 aa).

Glutamine 236 carries the post-translational modification N5-methylglutamine.

This sequence belongs to the prokaryotic/mitochondrial release factor family. Post-translationally, methylated by PrmC. Methylation increases the termination efficiency of RF1.

The protein localises to the cytoplasm. Peptide chain release factor 1 directs the termination of translation in response to the peptide chain termination codons UAG and UAA. The chain is Peptide chain release factor 1 from Streptococcus pneumoniae serotype 2 (strain D39 / NCTC 7466).